Reading from the N-terminus, the 275-residue chain is Shikimate dehydrogenase (NADP(+)) (275 aa).

Residues 16–18 and Thr-63 contribute to the shikimate site; that span reads SKS. Catalysis depends on Lys-67, which acts as the Proton acceptor. The shikimate site is built by Asn-88 and Asp-104. Residues 129–133, 153–158, and Met-219 contribute to the NADP(+) site; these read GAGGA and NRTVAR. Tyr-221 is a binding site for shikimate. Residue Gly-243 participates in NADP(+) binding.

It belongs to the shikimate dehydrogenase family. In terms of assembly, homodimer.

It catalyses the reaction shikimate + NADP(+) = 3-dehydroshikimate + NADPH + H(+). The protein operates within metabolic intermediate biosynthesis; chorismate biosynthesis; chorismate from D-erythrose 4-phosphate and phosphoenolpyruvate: step 4/7. Its function is as follows. Involved in the biosynthesis of the chorismate, which leads to the biosynthesis of aromatic amino acids. Catalyzes the reversible NADPH linked reduction of 3-dehydroshikimate (DHSA) to yield shikimate (SA). The polypeptide is Shikimate dehydrogenase (NADP(+)) (Marinobacter nauticus (strain ATCC 700491 / DSM 11845 / VT8) (Marinobacter aquaeolei)).